The following is a 123-amino-acid chain: NADH-quinone oxidoreductase subunit A (123 aa).

Transmembrane regions (helical) follow at residues 11 to 31, 68 to 88, and 93 to 113; these read YLPIAIFFGIAVLVSGLIMML, LVAILFIIFDLEITFLVPWAI, and IGKIGFFSMMFFLFVLIIGFI.

Belongs to the complex I subunit 3 family. NDH-1 is composed of 14 different subunits. Subunits NuoA, H, J, K, L, M, N constitute the membrane sector of the complex.

Its subcellular location is the cell inner membrane. It carries out the reaction a quinone + NADH + 5 H(+)(in) = a quinol + NAD(+) + 4 H(+)(out). NDH-1 shuttles electrons from NADH, via FMN and iron-sulfur (Fe-S) centers, to quinones in the respiratory chain. The immediate electron acceptor for the enzyme in this species is believed to be ubiquinone. Couples the redox reaction to proton translocation (for every two electrons transferred, four hydrogen ions are translocated across the cytoplasmic membrane), and thus conserves the redox energy in a proton gradient. This chain is NADH-quinone oxidoreductase subunit A, found in Rickettsia typhi (strain ATCC VR-144 / Wilmington).